A 324-amino-acid polypeptide reads, in one-letter code: Cuticle collagen lon-3 (324 aa).

A signal peptide spans methionine 1–serine 30. Positions valine 119–tyrosine 324 are disordered. Triple-helical region regions lie at residues glycine 129–aspartate 152, glycine 170–aspartate 229, and glycine 235–proline 294. Low complexity-rich tracts occupy residues proline 136–glutamine 151, proline 168–proline 181, proline 210–serine 223, glycine 235–glutamine 246, and glutamate 261–proline 273. Positions lysine 296–asparagine 311 are enriched in basic and acidic residues. The span at arginine 314 to tyrosine 324 shows a compositional bias: basic residues.

The protein belongs to the cuticular collagen family. In terms of assembly, collagen polypeptide chains are complexed within the cuticle by disulfide bonds and other types of covalent cross-links.

In terms of biological role, nematode cuticles are composed largely of collagen-like proteins. The cuticle functions both as an exoskeleton and as a barrier to protect the worm from its environment. Dose-dependent regulator of body length and shape. The sequence is that of Cuticle collagen lon-3 (lon-3) from Caenorhabditis elegans.